The chain runs to 279 residues: Prostatic spermine-binding protein (279 aa).

The N-terminal stretch at 1-17 is a signal peptide; the sequence is MLLLVTLALLAGPTCRA. Glutamine 18 is modified (pyrrolidone carboxylic acid). A Jacalin-type lectin domain is found at 18-151; that stretch reads QNILGNNVGT…LNGMGFKWKN (134 aa). Asparagine 62 is a glycosylation site (N-linked (GlcNAc...) asparagine). Composition is skewed to acidic residues over residues 160 to 177 and 185 to 279; these read DDDK…NEED and NDHD…EEEE. Residues 160–279 form a disordered region; that stretch reads DDDKEDDDDE…DDDNGDEEEE (120 aa).

This sequence to mouse SBP. In terms of tissue distribution, prostate.

Functionally, spermine-binding protein is an androgen regulated ventral prostate glycoprotein that binds various polyamines. The polypeptide is Prostatic spermine-binding protein (Sbp) (Rattus norvegicus (Rat)).